The sequence spans 226 residues: Deoxyribose-phosphate aldolase (226 aa).

The Proton donor/acceptor role is filled by D95. K157 serves as the catalytic Schiff-base intermediate with acetaldehyde. K186 (proton donor/acceptor) is an active-site residue.

It belongs to the DeoC/FbaB aldolase family. DeoC type 1 subfamily.

The protein resides in the cytoplasm. It carries out the reaction 2-deoxy-D-ribose 5-phosphate = D-glyceraldehyde 3-phosphate + acetaldehyde. Its pathway is carbohydrate degradation; 2-deoxy-D-ribose 1-phosphate degradation; D-glyceraldehyde 3-phosphate and acetaldehyde from 2-deoxy-alpha-D-ribose 1-phosphate: step 2/2. Partially inhibited by acetaldehyde. After incubation for 2, 4 and 6 hours in 300 mM acetaldehyde at 25 degrees Celsius, retains approximately 61.32%, 42.33% and 34.73% of the initial 2-deoxy-D-ribose-5-phosphate (DR5P) cleavage activity, respectively. In terms of biological role, catalyzes a reversible aldol reaction between acetaldehyde and D-glyceraldehyde 3-phosphate to generate 2-deoxy-D-ribose 5-phosphate. Functionally, in vitro, DERA can catalyze the aldol condensation of chloroacetaldehyde (CHAD) and acetaldehyde (ACD), yielding (S)-4-chloro-3-hydroxybutanal ((S)-CHB), which can combine with another aldehyde to form (3R,5S)-6-chloro-2,4,6-trideoxyhexapyranose (CTeHP), a key intermediate for statin drugs. The polypeptide is Deoxyribose-phosphate aldolase (Pseudomonas syringae pv. syringae (strain B728a)).